The chain runs to 321 residues: Cytochrome c biogenesis protein CcsA (321 aa).

Helical transmembrane passes span 17-37, 44-64, 71-91, 98-118, 143-163, 225-245, 258-275, and 286-306; these read IVSI…IVGL, GMIS…IYSG, LYES…IPYF, LSLV…SGLL, MVLS…LLVI, VISL…VWAN, ETWA…LHTR, and AIVA…VNLL.

It belongs to the CcmF/CycK/Ccl1/NrfE/CcsA family. May interact with Ccs1.

The protein localises to the plastid. It is found in the chloroplast thylakoid membrane. Required during biogenesis of c-type cytochromes (cytochrome c6 and cytochrome f) at the step of heme attachment. This Buxus microphylla (Littleleaf boxwood) protein is Cytochrome c biogenesis protein CcsA.